The sequence spans 185 residues: Ribosome-recycling factor (185 aa).

This sequence belongs to the RRF family.

Its subcellular location is the cytoplasm. Responsible for the release of ribosomes from messenger RNA at the termination of protein biosynthesis. May increase the efficiency of translation by recycling ribosomes from one round of translation to another. The sequence is that of Ribosome-recycling factor from Actinobacillus succinogenes (strain ATCC 55618 / DSM 22257 / CCUG 43843 / 130Z).